Consider the following 283-residue polypeptide: Acetylglutamate kinase (283 aa).

Residues 63 to 64, Arg85, and Asn178 each bind substrate; that span reads GG.

It belongs to the acetylglutamate kinase family. ArgB subfamily.

The protein localises to the cytoplasm. The catalysed reaction is N-acetyl-L-glutamate + ATP = N-acetyl-L-glutamyl 5-phosphate + ADP. It participates in amino-acid biosynthesis; L-arginine biosynthesis; N(2)-acetyl-L-ornithine from L-glutamate: step 2/4. In terms of biological role, catalyzes the ATP-dependent phosphorylation of N-acetyl-L-glutamate. The protein is Acetylglutamate kinase of Prochlorococcus marinus (strain MIT 9515).